The sequence spans 277 residues: 2-dehydro-3-deoxyphosphooctonate aldolase (277 aa).

Belongs to the KdsA family.

Its subcellular location is the cytoplasm. The catalysed reaction is D-arabinose 5-phosphate + phosphoenolpyruvate + H2O = 3-deoxy-alpha-D-manno-2-octulosonate-8-phosphate + phosphate. The protein operates within carbohydrate biosynthesis; 3-deoxy-D-manno-octulosonate biosynthesis; 3-deoxy-D-manno-octulosonate from D-ribulose 5-phosphate: step 2/3. It functions in the pathway bacterial outer membrane biogenesis; lipopolysaccharide biosynthesis. In Dichelobacter nodosus (strain VCS1703A), this protein is 2-dehydro-3-deoxyphosphooctonate aldolase.